The chain runs to 509 residues: MVDGVMILPVLMMMAFPSPSVEDEKPKVNQKLYMCVCEGLSCGNEDHCEGQQCFSSLSINDGFHVYQKGCFQVYEQGKMTCKTPPSPGQAVECCQGDWCNRNITAQLPTKGKSFPGTQNFHLEVGLIILSVVFAVCLLACILGVALRKFKRRNQERLNPRDVEYGTIEGLITTNVGDSTLAELLDHSCTSGSGSGLPFLVQRTVARQITLLECVGKGRYGEVWRGSWQGENVAVKIFSSRDEKSWFRETELYNTVMLRHENILGFIASDMTSRHSSTQLWLITHYHEMGSLYDYLQLTTLDTVSCLRIVLSIASGLAHLHIEIFGTQGKSAIAHRDLKSKNILVKKNGQCCIADLGLAVMHSQSTNQLDVGNNPRVGTKRYMAPEVLDETIQVDCFDSYKRVDIWAFGLVLWEVARRMVSNGIVEDYKPPFYDVVPNDPSFEDMRKVVCVDQQRPNIPNRWFSDPTLTSLAKLMKECWYQNPSARLTALRIKKTLTKIDNSLDKLKTDC.

The first 20 residues, 1 to 20 (MVDGVMILPVLMMMAFPSPS), serve as a signal peptide directing secretion. Over 21–123 (VEDEKPKVNQ…FPGTQNFHLE (103 aa)) the chain is Extracellular. Asn102 carries an N-linked (GlcNAc...) asparagine glycan. Residues 124 to 146 (VGLIILSVVFAVCLLACILGVAL) traverse the membrane as a helical segment. Topologically, residues 147–509 (RKFKRRNQER…NSLDKLKTDC (363 aa)) are cytoplasmic. In terms of domain architecture, GS spans 178–207 (STLAELLDHSCTSGSGSGLPFLVQRTVARQ). The Protein kinase domain maps to 208 to 502 (ITLLECVGKG…KTLTKIDNSL (295 aa)). ATP is bound by residues 214–222 (VGKGRYGEV) and Lys235. Residue Asp336 is the Proton acceptor of the active site. Ser501 carries the phosphoserine modification.

Belongs to the protein kinase superfamily. TKL Ser/Thr protein kinase family. TGFB receptor subfamily. Interacts with FKBP1A. Interacts with FCHO1. Interacts with CLU. Interacts with type II receptors AMHR2 and ACVR2A. Interacts with BMP7. Interacts with BMP9. Interacts with BMP6 (when glycosylated); the interaction may induce HAMP expression. Interacts with TSC22D1/TSC-22. The cofactor is Mg(2+). Mn(2+) is required as a cofactor. Highly expressed in bone during developmental stages. Expressed in normal parenchymal cells, endothelial cells, fibroblasts and tumor-derived epithelial cells.

It is found in the membrane. It carries out the reaction L-threonyl-[receptor-protein] + ATP = O-phospho-L-threonyl-[receptor-protein] + ADP + H(+). The enzyme catalyses L-seryl-[receptor-protein] + ATP = O-phospho-L-seryl-[receptor-protein] + ADP + H(+). Functionally, bone morphogenetic protein (BMP) type I receptor that is involved in a wide variety of biological processes, including bone, heart, cartilage, nervous, and reproductive system development and regulation. As a type I receptor, forms heterotetrameric receptor complexes with the type II receptors AMHR2, ACVR2A ors ACVR2B. Upon binding of ligands such as BMP7 or BMP9 to the heteromeric complexes, type II receptors transphosphorylate ACVR1 intracellular domain. In turn, ACVR1 kinase domain is activated and subsequently phosphorylates SMAD1/5/8 proteins that transduce the signal. In addition to its role in mediating BMP pathway-specific signaling, suppresses TGFbeta/activin pathway signaling by interfering with the binding of activin to its type II receptor. Besides canonical SMAD signaling, can activate non-canonical pathways such as p38 mitogen-activated protein kinases/MAPKs. May promote the expression of HAMP, potentially via its interaction with BMP6. The polypeptide is Activin receptor type-1 (Acvr1) (Mus musculus (Mouse)).